The chain runs to 278 residues: Indole-3-glycerol phosphate synthase (278 aa).

Belongs to the TrpC family.

It carries out the reaction 1-(2-carboxyphenylamino)-1-deoxy-D-ribulose 5-phosphate + H(+) = (1S,2R)-1-C-(indol-3-yl)glycerol 3-phosphate + CO2 + H2O. Its pathway is amino-acid biosynthesis; L-tryptophan biosynthesis; L-tryptophan from chorismate: step 4/5. This chain is Indole-3-glycerol phosphate synthase, found in Pseudomonas aeruginosa (strain LESB58).